Here is a 239-residue protein sequence, read N- to C-terminus: Homeobox-leucine zipper protein HOX12 (239 aa).

Residues 25 to 65 (ATSGGEQKKARQRRRRKVKPEAAAALAGESGGDEQAKKRRL) are disordered. The homeobox DNA-binding region spans 58–117 (EQAKKRRLSDEQARFLEMSFKKERKLETPRKVQLAAELGLDAKQVAVWFQNRRARHKSKL). Positions 107 to 168 (QNRRARHKSK…KLAAVAAATT (62 aa)) form a coiled coil.

The protein belongs to the HD-ZIP homeobox family. Class I subfamily. As to expression, expressed in seedlings, roots, stems, leaf sheaths and panicles.

The protein localises to the nucleus. In terms of biological role, probable transcription factor. The polypeptide is Homeobox-leucine zipper protein HOX12 (HOX12) (Oryza sativa subsp. japonica (Rice)).